Here is a 176-residue protein sequence, read N- to C-terminus: MRLSLAAAISHGRVYRRLGLGPESRIHLLRNLLTGLVRHERIEATWARVDEMRGYAEKLIDYGKLGDTNERAMRMADFWLTEKDLIPKLFKVLAPRFQGQNGNYTRMLQIPNRKEQDRAKMAVIEYKGNCLPPLPLPHRDSNLTLLNQLLLGLQQDLHHNQKASLHSSHTVQTPKT.

The N-terminal 8 residues, 1 to 8, are a transit peptide targeting the mitochondrion; that stretch reads MRLSLAAA.

It belongs to the bacterial ribosomal protein bL17 family. In terms of assembly, component of the mitochondrial ribosome large subunit (39S) which comprises a 16S rRNA and about 50 distinct proteins.

Its subcellular location is the mitochondrion. The polypeptide is Large ribosomal subunit protein bL17m (Mrpl17) (Rattus norvegicus (Rat)).